The following is a 335-amino-acid chain: Glyceraldehyde-3-phosphate dehydrogenase (335 aa).

NAD(+)-binding positions include 10-11, Asp-33, Lys-77, and Thr-119; that span reads RI. Residues 150 to 152, Thr-181, 210 to 211, and Arg-233 contribute to the D-glyceraldehyde 3-phosphate site; these read SCT and TG. The active-site Nucleophile is the Cys-151. Residue Asn-315 participates in NAD(+) binding.

It belongs to the glyceraldehyde-3-phosphate dehydrogenase family. In terms of assembly, homotetramer.

The protein localises to the cytoplasm. It carries out the reaction D-glyceraldehyde 3-phosphate + phosphate + NAD(+) = (2R)-3-phospho-glyceroyl phosphate + NADH + H(+). It functions in the pathway carbohydrate degradation; glycolysis; pyruvate from D-glyceraldehyde 3-phosphate: step 1/5. Catalyzes the oxidative phosphorylation of glyceraldehyde 3-phosphate (G3P) to 1,3-bisphosphoglycerate (BPG) using the cofactor NAD. The first reaction step involves the formation of a hemiacetal intermediate between G3P and a cysteine residue, and this hemiacetal intermediate is then oxidized to a thioester, with concomitant reduction of NAD to NADH. The reduced NADH is then exchanged with the second NAD, and the thioester is attacked by a nucleophilic inorganic phosphate to produce BPG. The sequence is that of Glyceraldehyde-3-phosphate dehydrogenase (gap) from Chlamydia muridarum (strain MoPn / Nigg).